The sequence spans 132 residues: Small ribosomal subunit protein uS9 (132 aa).

A disordered region spans residues 100–132 (LKSNGLLTRDDRTKERKKPGLKRARKAPQYTKR). Residues 114 to 132 (ERKKPGLKRARKAPQYTKR) show a composition bias toward basic residues.

The protein belongs to the universal ribosomal protein uS9 family.

This chain is Small ribosomal subunit protein uS9, found in Dehalococcoides mccartyi (strain ATCC BAA-2266 / KCTC 15142 / 195) (Dehalococcoides ethenogenes (strain 195)).